The sequence spans 291 residues: 2-C-methyl-D-erythritol 4-phosphate cytidylyltransferase (291 aa).

The segment at 1–23 (MTERDFDTPVETPTVQPAPAQGA) is disordered.

Belongs to the IspD/TarI cytidylyltransferase family. IspD subfamily.

It catalyses the reaction 2-C-methyl-D-erythritol 4-phosphate + CTP + H(+) = 4-CDP-2-C-methyl-D-erythritol + diphosphate. It functions in the pathway isoprenoid biosynthesis; isopentenyl diphosphate biosynthesis via DXP pathway; isopentenyl diphosphate from 1-deoxy-D-xylulose 5-phosphate: step 2/6. In terms of biological role, catalyzes the formation of 4-diphosphocytidyl-2-C-methyl-D-erythritol from CTP and 2-C-methyl-D-erythritol 4-phosphate (MEP). This Bifidobacterium longum (strain DJO10A) protein is 2-C-methyl-D-erythritol 4-phosphate cytidylyltransferase.